The primary structure comprises 332 residues: Transcription factor HBP-1b(c38) (332 aa).

The tract at residues 1–48 (MAEASPRTETSTDDTDENLMLEPGNAALAVVSDSSDRSRDKNGDQKTM) is disordered. Over residues 34–47 (SSDRSRDKNGDQKT) the composition is skewed to basic and acidic residues. Residues 44-107 (DQKTMRRLAQ…SSADQSHSMS (64 aa)) enclose the bZIP domain. Residues 46–66 (KTMRRLAQNREAARKSRLRKK) are basic motif. Positions 47 to 142 (TMRRLAQNRE…RAAVNAHAGD (96 aa)) form a coiled coil. The tract at residues 72 to 86 (LENSRLKLTQLEQEL) is leucine-zipper. Residues 111 to 329 (ALAFDTEYAR…RALSSLWLAR (219 aa)) form the DOG1 domain.

Belongs to the bZIP family. As to quaternary structure, binds DNA as a dimer.

It localises to the nucleus. Its function is as follows. Transcriptional activator that binds specifically to the DNA sequence 5'-TGACG-3'. Recognizes ocs elements like the as-1 motif of the cauliflower mosaic virus 35S promoter. Binding to the as-1-like cis elements mediate auxin- and salicylic acid-inducible transcription. Binds to the hexamer motif 5'-ACGTCA-3' of histone gene promoters. The polypeptide is Transcription factor HBP-1b(c38) (Triticum aestivum (Wheat)).